A 525-amino-acid chain; its full sequence is Lysine--tRNA ligase (525 aa).

The 'HIGH' region motif lies at 44–52 (PSGLPHIGT). Residues 290-294 (KISKS) carry the 'KMSKS' region motif. Lys-293 provides a ligand contact to ATP.

The protein belongs to the class-I aminoacyl-tRNA synthetase family.

The protein resides in the cytoplasm. It carries out the reaction tRNA(Lys) + L-lysine + ATP = L-lysyl-tRNA(Lys) + AMP + diphosphate. The chain is Lysine--tRNA ligase from Rickettsia felis (strain ATCC VR-1525 / URRWXCal2) (Rickettsia azadi).